The following is a 129-amino-acid chain: Fluoride-specific ion channel FluC 2 (129 aa).

4 consecutive transmembrane segments (helical) span residues 3–23 (FLYV…MNLW), 32–52 (ATLA…PFLA), 59–79 (LVLL…FSAF), and 90–110 (GEVV…LVMV). Na(+) is bound by residues G71 and T74.

It belongs to the fluoride channel Fluc/FEX (TC 1.A.43) family.

It is found in the cell membrane. The enzyme catalyses fluoride(in) = fluoride(out). With respect to regulation, na(+) is not transported, but it plays an essential structural role and its presence is essential for fluoride channel function. In terms of biological role, fluoride-specific ion channel. Important for reducing fluoride concentration in the cell, thus reducing its toxicity. In Listeria innocua serovar 6a (strain ATCC BAA-680 / CLIP 11262), this protein is Fluoride-specific ion channel FluC 2.